A 349-amino-acid polypeptide reads, in one-letter code: Tribbles homolog 3 (349 aa).

The interaction with DDIT3/CHOP stretch occupies residues 1-122 (MRATSLAASA…QHVARPTEVL (122 aa)). A disordered region spans residues 35–57 (VRDEPEPGPTPSLPPASDLSPAV). One can recognise a Protein kinase domain in the interval 63–310 (LGPYILLERE…ALGILLHPWL (248 aa)). The segment at 317-349 (VSPPRSDRREMDQVVPDGPQLEEAEEGEVGLYG) is disordered. The segment covering 336 to 349 (QLEEAEEGEVGLYG) has biased composition (acidic residues).

It belongs to the protein kinase superfamily. CAMK Ser/Thr protein kinase family. Tribbles subfamily. Interacts with AKT1, AKT2, MAP2K1 and MAP2K7. Interacts with ATF4. Interacts with DDIT3/CHOP and inhibits its interaction with EP300/P300. Interacts with APOBEC3C. Interacts (via N-terminus) with APOBEC3A. Interacts with RELA. As to expression, detected only in the lung. Not detected in the heart, brain, spleen, liver, skeletal muscle, kidney and testis.

It localises to the nucleus. Its function is as follows. Inactive protein kinase which acts as a regulator of the integrated stress response (ISR), a process for adaptation to various stress. Inhibits the transcriptional activity of DDIT3/CHOP and is involved in DDIT3/CHOP-dependent cell death during ER stress. May play a role in programmed neuronal cell death but does not appear to affect non-neuronal cells. Acts as a negative feedback regulator of the ATF4-dependent transcription during the ISR: while TRIB3 expression is promoted by ATF4, TRIB3 protein interacts with ATF4 and inhibits ATF4 transcription activity. Disrupts insulin signaling by binding directly to Akt kinases and blocking their activation. May bind directly to and mask the 'Thr-308' phosphorylation site in AKT1. Interacts with the NF-kappa-B transactivator p65 RELA and inhibits its phosphorylation and thus its transcriptional activation activity. Interacts with MAPK kinases and regulates activation of MAP kinases. Can inhibit APOBEC3A editing of nuclear DNA. The chain is Tribbles homolog 3 (Trib3) from Rattus norvegicus (Rat).